A 120-amino-acid chain; its full sequence is Phosphoribosyl-AMP cyclohydrolase (120 aa).

Position 75 (aspartate 75) interacts with Mg(2+). Zn(2+) is bound at residue cysteine 76. 2 residues coordinate Mg(2+): aspartate 77 and aspartate 79. Residues cysteine 92 and cysteine 99 each coordinate Zn(2+).

This sequence belongs to the PRA-CH family. Homodimer. It depends on Mg(2+) as a cofactor. Zn(2+) is required as a cofactor.

Its subcellular location is the cytoplasm. The enzyme catalyses 1-(5-phospho-beta-D-ribosyl)-5'-AMP + H2O = 1-(5-phospho-beta-D-ribosyl)-5-[(5-phospho-beta-D-ribosylamino)methylideneamino]imidazole-4-carboxamide. Its pathway is amino-acid biosynthesis; L-histidine biosynthesis; L-histidine from 5-phospho-alpha-D-ribose 1-diphosphate: step 3/9. In terms of biological role, catalyzes the hydrolysis of the adenine ring of phosphoribosyl-AMP. This chain is Phosphoribosyl-AMP cyclohydrolase, found in Haloarcula marismortui (strain ATCC 43049 / DSM 3752 / JCM 8966 / VKM B-1809) (Halobacterium marismortui).